Here is an 828-residue protein sequence, read N- to C-terminus: DNA gyrase subunit A (828 aa).

In terms of domain architecture, Topo IIA-type catalytic spans 32 to 497 (LPDVRDGLKP…EVLSLEDEDL (466 aa)). Y120 serves as the catalytic O-(5'-phospho-DNA)-tyrosine intermediate. The GyrA-box motif lies at 524-530 (QKRGGRG).

It belongs to the type II topoisomerase GyrA/ParC subunit family. As to quaternary structure, heterotetramer, composed of two GyrA and two GyrB chains. In the heterotetramer, GyrA contains the active site tyrosine that forms a transient covalent intermediate with DNA, while GyrB binds cofactors and catalyzes ATP hydrolysis.

It localises to the cytoplasm. It catalyses the reaction ATP-dependent breakage, passage and rejoining of double-stranded DNA.. Its function is as follows. A type II topoisomerase that negatively supercoils closed circular double-stranded (ds) DNA in an ATP-dependent manner to modulate DNA topology and maintain chromosomes in an underwound state. Negative supercoiling favors strand separation, and DNA replication, transcription, recombination and repair, all of which involve strand separation. Also able to catalyze the interconversion of other topological isomers of dsDNA rings, including catenanes and knotted rings. Type II topoisomerases break and join 2 DNA strands simultaneously in an ATP-dependent manner. The chain is DNA gyrase subunit A from Streptococcus pyogenes serotype M1.